A 798-amino-acid polypeptide reads, in one-letter code: Exo-1,4-beta-xylosidase xlnD (798 aa).

A signal peptide spans 1–20 (MPGAASIVAVLAALLPTALG). N23, N87, N142, and N237 each carry an N-linked (GlcNAc...) asparagine glycan. The active site involves D310. Residues N326, N391, N404, N443, N480, N522, N618, N645, N658, N685, and N707 are each glycosylated (N-linked (GlcNAc...) asparagine).

The protein belongs to the glycosyl hydrolase 3 family.

It localises to the secreted. The catalysed reaction is Hydrolysis of (1-&gt;4)-beta-D-xylans, to remove successive D-xylose residues from the non-reducing termini.. Its pathway is glycan degradation; xylan degradation. Xylan 1,4-beta-xylosidase involved in the hydrolysis of xylan, a major structural heterogeneous polysaccharide found in plant biomass representing the second most abundant polysaccharide in the biosphere, after cellulose. The chain is Exo-1,4-beta-xylosidase xlnD (xlnD) from Aspergillus oryzae (strain ATCC 42149 / RIB 40) (Yellow koji mold).